The primary structure comprises 288 residues: Bifunctional protein FolD (288 aa).

NADP(+)-binding positions include 168 to 170, Thr195, and Val236; that span reads GRG.

Belongs to the tetrahydrofolate dehydrogenase/cyclohydrolase family. Homodimer.

The enzyme catalyses (6R)-5,10-methylene-5,6,7,8-tetrahydrofolate + NADP(+) = (6R)-5,10-methenyltetrahydrofolate + NADPH. The catalysed reaction is (6R)-5,10-methenyltetrahydrofolate + H2O = (6R)-10-formyltetrahydrofolate + H(+). Its pathway is one-carbon metabolism; tetrahydrofolate interconversion. Its function is as follows. Catalyzes the oxidation of 5,10-methylenetetrahydrofolate to 5,10-methenyltetrahydrofolate and then the hydrolysis of 5,10-methenyltetrahydrofolate to 10-formyltetrahydrofolate. In Mycobacterium sp. (strain JLS), this protein is Bifunctional protein FolD.